Here is a 423-residue protein sequence, read N- to C-terminus: Adenylosuccinate synthetase (423 aa).

Residues 11–17 and 39–41 each bind GTP; these read GDEGKGK and GHT. D12 acts as the Proton acceptor in catalysis. Mg(2+)-binding residues include D12 and G39. Residues 12–15, 37–40, T129, R143, N219, T234, and R298 each bind IMP; these read DEGK and NAGH. Catalysis depends on H40, which acts as the Proton donor. 294-300 contacts substrate; it reads VTTGRRR. GTP-binding positions include R300, 326 to 328, and 411 to 413; these read KLD and GTG.

The protein belongs to the adenylosuccinate synthetase family. In terms of assembly, homodimer. Mg(2+) is required as a cofactor.

The protein localises to the cytoplasm. The enzyme catalyses IMP + L-aspartate + GTP = N(6)-(1,2-dicarboxyethyl)-AMP + GDP + phosphate + 2 H(+). The protein operates within purine metabolism; AMP biosynthesis via de novo pathway; AMP from IMP: step 1/2. Plays an important role in the de novo pathway and in the salvage pathway of purine nucleotide biosynthesis. Catalyzes the first committed step in the biosynthesis of AMP from IMP. The chain is Adenylosuccinate synthetase from Penicillium rubens (strain ATCC 28089 / DSM 1075 / NRRL 1951 / Wisconsin 54-1255) (Penicillium chrysogenum).